Here is a 195-residue protein sequence, read N- to C-terminus: HTH-type transcriptional regulator BetI (195 aa).

The HTH tetR-type domain maps to 8–68 (SIRRRQLIDA…ATMRDITSQL (61 aa)). Positions 31–50 (TIAQIARRAGVSTGIISHYF) form a DNA-binding region, H-T-H motif.

Its pathway is amine and polyamine biosynthesis; betaine biosynthesis via choline pathway [regulation]. Its function is as follows. Repressor involved in the biosynthesis of the osmoprotectant glycine betaine. It represses transcription of the choline transporter BetT and the genes of BetAB involved in the synthesis of glycine betaine. This is HTH-type transcriptional regulator BetI from Escherichia coli O157:H7.